The sequence spans 29 residues: Kunitz-type serine protease inhibitor RsTIQ7 (29 aa).

The region spanning 6 to 26 (QCVPTADPGPCKAYIPMWWYN) is the BPTI/Kunitz inhibitor domain.

Serine protease inhibitor. Inhibits trypsin, elastase, plasmin and kallikrein. The protein is Kunitz-type serine protease inhibitor RsTIQ7 of Rhipicephalus sanguineus (Brown dog tick).